The sequence spans 514 residues: Calcium-binding mitochondrial carrier protein SCaMC-2 (514 aa).

Topologically, residues 1-234 are mitochondrial intermembrane; that stretch reads MARPRSLVSP…EKQTGMWWRH (234 aa). EF-hand domains follow at residues 56 to 91, 92 to 122, 123 to 158, and 159 to 194; these read EHER…LGVH, RTEL…HYLR, DHEK…LGVN, and ISEQ…HSAE. D69, N71, D73, D80, D105, D107, D109, Q111, and E116 together coordinate Ca(2+). Solcar repeat units follow at residues 229–315, 323–408, and 420–508; these read GMWW…IKRI, LGIH…LKNA, and PGVF…LKLT. Residues 235–252 form a helical membrane-spanning segment; sequence LVAGGGAGAVSRTCTAPL. The Mitochondrial matrix segment spans residues 253 to 289; that stretch reads DRLKVLMQVHASRSNNMSILGGFTHMIREGGFRSLWR. The helical transmembrane segment at 290-309 threads the bilayer; it reads GNGINVIKIAPESAIKFMAY. Residues 310 to 332 lie on the Mitochondrial intermembrane side of the membrane; that stretch reads EQIKRIIGSNQETLGIHERFVAG. A helical transmembrane segment spans residues 333–346; the sequence is SLAGVIAQSSIYPM. Topologically, residues 347–382 are mitochondrial matrix; sequence EVLKTRMALRKTGQYQGVLDCGKKILLQEGLSAFYK. Residues 383–402 traverse the membrane as a helical segment; sequence GYVPNMLGIIPYAGIDLAVY. Over 403-425 the chain is Mitochondrial intermembrane; that stretch reads ETLKNAWLQRYATSSADPGVFVL. The chain crosses the membrane as a helical span at residues 426 to 443; it reads LACGTVSSTCGQLASYPL. Residues 444–482 are Mitochondrial matrix-facing; that stretch reads ALVRTRMQAEASVEGAPQMTMSKLFKHIVKTEGAFGLYR. The helical transmembrane segment at 483-502 threads the bilayer; the sequence is GLAPNFMKVIPAVSISYVVY. At 503–514 the chain is on the mitochondrial intermembrane side; that stretch reads ENLKLTLGVQSR.

It belongs to the mitochondrial carrier (TC 2.A.29) family.

The protein localises to the mitochondrion inner membrane. In terms of biological role, calcium-dependent mitochondrial solute carrier. This chain is Calcium-binding mitochondrial carrier protein SCaMC-2 (slc25a25), found in Xenopus laevis (African clawed frog).